The following is a 186-amino-acid chain: Nicotinamide-nucleotide adenylyltransferase (186 aa).

Belongs to the archaeal NMN adenylyltransferase family.

The protein localises to the cytoplasm. It catalyses the reaction beta-nicotinamide D-ribonucleotide + ATP + H(+) = diphosphate + NAD(+). Its pathway is cofactor biosynthesis; NAD(+) biosynthesis; NAD(+) from nicotinamide D-ribonucleotide: step 1/1. In Pyrococcus horikoshii (strain ATCC 700860 / DSM 12428 / JCM 9974 / NBRC 100139 / OT-3), this protein is Nicotinamide-nucleotide adenylyltransferase.